The sequence spans 329 residues: Ketol-acid reductoisomerase (NADP(+)) (329 aa).

Residues 2-182 (TQLFYDTDAD…GGTRAGILET (181 aa)) form the KARI N-terminal Rossmann domain. Residues 25 to 28 (YGSQ), S51, S53, and 83 to 86 (DEFQ) each bind NADP(+). H108 is a catalytic residue. Position 134 (G134) interacts with NADP(+). In terms of domain architecture, KARI C-terminal knotted spans 183-328 (NFKEETETDL…KSLRSMFSWL (146 aa)). Residues D191, E195, E227, and E231 each contribute to the Mg(2+) site. S252 is a substrate binding site.

This sequence belongs to the ketol-acid reductoisomerase family. Mg(2+) serves as cofactor.

It catalyses the reaction (2R)-2,3-dihydroxy-3-methylbutanoate + NADP(+) = (2S)-2-acetolactate + NADPH + H(+). The catalysed reaction is (2R,3R)-2,3-dihydroxy-3-methylpentanoate + NADP(+) = (S)-2-ethyl-2-hydroxy-3-oxobutanoate + NADPH + H(+). It participates in amino-acid biosynthesis; L-isoleucine biosynthesis; L-isoleucine from 2-oxobutanoate: step 2/4. Its pathway is amino-acid biosynthesis; L-valine biosynthesis; L-valine from pyruvate: step 2/4. Its function is as follows. Involved in the biosynthesis of branched-chain amino acids (BCAA). Catalyzes an alkyl-migration followed by a ketol-acid reduction of (S)-2-acetolactate (S2AL) to yield (R)-2,3-dihydroxy-isovalerate. In the isomerase reaction, S2AL is rearranged via a Mg-dependent methyl migration to produce 3-hydroxy-3-methyl-2-ketobutyrate (HMKB). In the reductase reaction, this 2-ketoacid undergoes a metal-dependent reduction by NADPH to yield (R)-2,3-dihydroxy-isovalerate. The polypeptide is Ketol-acid reductoisomerase (NADP(+)) (Prochlorococcus marinus (strain MIT 9301)).